We begin with the raw amino-acid sequence, 424 residues long: Serine hydroxymethyltransferase (424 aa).

(6S)-5,6,7,8-tetrahydrofolate is bound by residues leucine 126 and 130–132; that span reads GHL. Lysine 235 carries the N6-(pyridoxal phosphate)lysine modification. Position 359–361 (359–361) interacts with (6S)-5,6,7,8-tetrahydrofolate; the sequence is SPF.

This sequence belongs to the SHMT family. As to quaternary structure, homodimer. The cofactor is pyridoxal 5'-phosphate.

It is found in the cytoplasm. The catalysed reaction is (6R)-5,10-methylene-5,6,7,8-tetrahydrofolate + glycine + H2O = (6S)-5,6,7,8-tetrahydrofolate + L-serine. It functions in the pathway one-carbon metabolism; tetrahydrofolate interconversion. The protein operates within amino-acid biosynthesis; glycine biosynthesis; glycine from L-serine: step 1/1. Its function is as follows. Catalyzes the reversible interconversion of serine and glycine with tetrahydrofolate (THF) serving as the one-carbon carrier. This reaction serves as the major source of one-carbon groups required for the biosynthesis of purines, thymidylate, methionine, and other important biomolecules. Also exhibits THF-independent aldolase activity toward beta-hydroxyamino acids, producing glycine and aldehydes, via a retro-aldol mechanism. This Prochlorococcus marinus (strain MIT 9303) protein is Serine hydroxymethyltransferase.